Consider the following 213-residue polypeptide: 3-isopropylmalate dehydratase small subunit (213 aa).

The protein belongs to the LeuD family. LeuD type 1 subfamily. Heterodimer of LeuC and LeuD.

It catalyses the reaction (2R,3S)-3-isopropylmalate = (2S)-2-isopropylmalate. The protein operates within amino-acid biosynthesis; L-leucine biosynthesis; L-leucine from 3-methyl-2-oxobutanoate: step 2/4. In terms of biological role, catalyzes the isomerization between 2-isopropylmalate and 3-isopropylmalate, via the formation of 2-isopropylmaleate. The protein is 3-isopropylmalate dehydratase small subunit of Aromatoleum aromaticum (strain DSM 19018 / LMG 30748 / EbN1) (Azoarcus sp. (strain EbN1)).